The sequence spans 362 residues: Histidinol-phosphate aminotransferase (362 aa).

Position 222 is an N6-(pyridoxal phosphate)lysine (lysine 222).

Belongs to the class-II pyridoxal-phosphate-dependent aminotransferase family. Histidinol-phosphate aminotransferase subfamily. Homodimer. Pyridoxal 5'-phosphate is required as a cofactor.

It catalyses the reaction L-histidinol phosphate + 2-oxoglutarate = 3-(imidazol-4-yl)-2-oxopropyl phosphate + L-glutamate. The protein operates within amino-acid biosynthesis; L-histidine biosynthesis; L-histidine from 5-phospho-alpha-D-ribose 1-diphosphate: step 7/9. The polypeptide is Histidinol-phosphate aminotransferase (Shewanella amazonensis (strain ATCC BAA-1098 / SB2B)).